A 398-amino-acid chain; its full sequence is Argininosuccinate synthase (398 aa).

9-17 (AYSGGLDTS) is an ATP binding site. Tyr-85 serves as a coordination point for L-citrulline. Residue Gly-115 coordinates ATP. Thr-117, Asn-121, and Asp-122 together coordinate L-aspartate. Asn-121 is an L-citrulline binding site. The L-citrulline site is built by Arg-125, Ser-173, Glu-258, and Tyr-270.

It belongs to the argininosuccinate synthase family. Type 1 subfamily. Homotetramer.

The protein resides in the cytoplasm. The enzyme catalyses L-citrulline + L-aspartate + ATP = 2-(N(omega)-L-arginino)succinate + AMP + diphosphate + H(+). It functions in the pathway amino-acid biosynthesis; L-arginine biosynthesis; L-arginine from L-ornithine and carbamoyl phosphate: step 2/3. The sequence is that of Argininosuccinate synthase from Streptococcus pneumoniae (strain ATCC BAA-255 / R6).